Reading from the N-terminus, the 393-residue chain is MTKRKQQDTKENLTLTVFESNKRCSNSGGEYFDRIPADLVIKILSKLSAKSMAKCRCVCKLLSSIIRQPNYNQLFPIKYPDPPRFIFTFLGGGMLFSYTSTQPENPDENSSLVATAHHHTDIPRDFSQILSSVHGLVCYHRKIKNDTVFVIYNPITGQYVTLPILEAHATINYFAIGYDPINKRFKVLCVTSVHHGTGEEFDSQHQVLTFETGRRNLFWRKIQCRRHYYTHRYHKGICIKGVLYYAATSMKPMLGPMIVCFDVRSEKFGFITWKPPSLINYKGKLGSINSNDNDLVLWVLEHGQERKWSKHIYVKPLQWPEFNGIDVNFLVTSKGEAVFCPNHYDPQVPFYLYYYNLEENIVVRVRVEVPESQGSKRVLFHAVPNYLENMKLT.

Residues 29–74 (GEYFDRIPADLVIKILSKLSAKSMAKCRCVCKLLSSIIRQPNYNQL) form the F-box domain.

The chain is Putative F-box protein At1g55070 from Arabidopsis thaliana (Mouse-ear cress).